A 594-amino-acid polypeptide reads, in one-letter code: Gamma-terpinene synthase, chloroplastic (594 aa).

A chloroplast-targeting transit peptide spans 1–44 (MATLSMQVSILSKEVKNVNNIGMRASKPMVARRVSTTRLRPICS). Residues D347 and D351 each contribute to the Mn(2+) site. The DDXXD motif signature appears at 347–351 (DDVYD). Homodimerization regions lie at residues 353–359 (YGTLDEL) and 425–462 (EAKW…FTLP). D491 and E499 together coordinate Mn(2+).

This sequence belongs to the terpene synthase family. As to quaternary structure, homodimer. Mn(2+) serves as cofactor. Requires Mg(2+) as cofactor. Expressed in peltate glandular trichomes.

The protein resides in the plastid. Its subcellular location is the chloroplast. The enzyme catalyses (2E)-geranyl diphosphate = gamma-terpinene + diphosphate. It carries out the reaction (2E)-geranyl diphosphate = alpha-terpinene + diphosphate. It functions in the pathway secondary metabolite biosynthesis; terpenoid biosynthesis. Functionally, involved in the biosynthesis of phenolic monoterpenes natural products thymol and carvacrol which have a broad range of biological activities acting as antimicrobial compounds, insecticides, antioxidants and pharmaceutical agents. Monoterpene synthase which catalyzes the conversion of geranyl diphosphate (GPP) to gamma-terpinene and the minor products alpha-thujene, alpha-terpinene, myrcene, sabinene, (+)-R-limonene, alpha-pinene and alpha-phellandrene. This chain is Gamma-terpinene synthase, chloroplastic, found in Origanum vulgare (Wild marjoram).